The sequence spans 375 residues: Heat-inducible transcription repressor HrcA (375 aa).

Low complexity predominate over residues 307 to 318; it reads ATDGATHAAASS. Positions 307–331 are disordered; the sequence is ATDGATHAAASSQTENQSGDDTRQA.

Belongs to the HrcA family.

Functionally, negative regulator of class I heat shock genes (grpE-dnaK-dnaJ and groELS operons). Prevents heat-shock induction of these operons. The sequence is that of Heat-inducible transcription repressor HrcA from Bifidobacterium adolescentis (strain ATCC 15703 / DSM 20083 / NCTC 11814 / E194a).